A 567-amino-acid polypeptide reads, in one-letter code: MRLSQFHLHTTKETPSDAELTSHRLMLRAGMIRKLASGLYTWSPLGLRVLRKVERIVREEMDRAGAVEFQIPTIQPKELWEQTGRWQKFGPQLLKIKDRKDQTFCYSPTAEEAACDFARSELSSYKQLPVNFYQIQTKFRDEIRPRFGVMRSREFLMKDAYSFHLHDECLVREYENMKSAYSRIFTRLGLDFRMVQADSGAIGGDASQEFHVIADSGEDALVFSTGSDYAANMEAAIAADPAPRAAASEAMRKVDTPTQKTCEDVAALLGINLQRTVKSVALIAGEGEAQQFVLVLVRGDHEVNEIKLAKVAGLDEQRFASEAEIAEHLGSVPGFLGPIAPAKAIRVVADREVAAMSDFVVGANEAGFHLAGVNWGRDLAEPEVADIRNVRAGDRALDGGELKIARGIEVGHVFQLGRTYARALDATVLDENGKAAVMAMGCYGIGISRVVAAAIEQNHDDAGIIWPDAMAPWQVVVCVINPKGDAAVADAATNLLQELRDAGLDAALDDRGLRPGAMFADMELIGIPHRVVVSERGLAAGTYEYRSRRASEAESLDKATLLQRLQG.

The protein belongs to the class-II aminoacyl-tRNA synthetase family. ProS type 1 subfamily. As to quaternary structure, homodimer.

The protein localises to the cytoplasm. The enzyme catalyses tRNA(Pro) + L-proline + ATP = L-prolyl-tRNA(Pro) + AMP + diphosphate. In terms of biological role, catalyzes the attachment of proline to tRNA(Pro) in a two-step reaction: proline is first activated by ATP to form Pro-AMP and then transferred to the acceptor end of tRNA(Pro). As ProRS can inadvertently accommodate and process non-cognate amino acids such as alanine and cysteine, to avoid such errors it has two additional distinct editing activities against alanine. One activity is designated as 'pretransfer' editing and involves the tRNA(Pro)-independent hydrolysis of activated Ala-AMP. The other activity is designated 'posttransfer' editing and involves deacylation of mischarged Ala-tRNA(Pro). The misacylated Cys-tRNA(Pro) is not edited by ProRS. The chain is Proline--tRNA ligase from Stenotrophomonas maltophilia (strain R551-3).